A 102-amino-acid chain; its full sequence is U3-aranetoxin-Ce1a (102 aa).

The first 21 residues, 1–21 (MKHLSIFFVFFCCICVMLCDA), serve as a signal peptide directing secretion.

The protein belongs to the neurotoxin 20 family. Expressed by the venom gland.

Its subcellular location is the secreted. This chain is U3-aranetoxin-Ce1a, found in Caerostris extrusa (Bark spider).